The sequence spans 304 residues: NADH-cytochrome b5 reductase 2 (304 aa).

The chain crosses the membrane as a helical span at residues 6–26 (GTPVVVAVAAVAATVLLLLLL). An FAD-binding FR-type domain is found at 43 to 155 (QAKYPLPLVG…RGPNGLLVYK (113 aa)). Residues 135-165 (DSMKIGDVIDFRGPNGLLVYKGSGTFMIKPD) and 174-209 (FAKHLGVIAGGTGITPMLQLIRHITSDPKDSTKCYL) contribute to the FAD site.

The protein belongs to the flavoprotein pyridine nucleotide cytochrome reductase family. FAD is required as a cofactor.

It is found in the membrane. The enzyme catalyses 2 Fe(III)-[cytochrome b5] + NADH = 2 Fe(II)-[cytochrome b5] + NAD(+) + H(+). In terms of biological role, NADH-cytochrome b5 reductases are involved in desaturation and elongation of fatty acids, cholesterol biosynthesis and drug metabolism. The sequence is that of NADH-cytochrome b5 reductase 2 (CYB5R2) from Gallus gallus (Chicken).